The sequence spans 983 residues: Probable beta-galactosidase C (983 aa).

A signal peptide spans M1 to G23. Residues Y82, N127, A128, E129, and N187 each coordinate substrate. The Proton donor role is filled by E188. N197 carries an N-linked (GlcNAc...) asparagine glycan. Residue Y251 participates in substrate binding. C257 and C304 are disulfide-bonded. Residue N276 is glycosylated (N-linked (GlcNAc...) asparagine). Residue E287 is the Nucleophile of the active site. Y353 is a binding site for substrate. N391, N434, N466, N516, N601, N676, N714, N719, and N804 each carry an N-linked (GlcNAc...) asparagine glycan.

The protein belongs to the glycosyl hydrolase 35 family.

It is found in the secreted. The enzyme catalyses Hydrolysis of terminal non-reducing beta-D-galactose residues in beta-D-galactosides.. Its function is as follows. Cleaves beta-linked terminal galactosyl residues from gangliosides, glycoproteins, and glycosaminoglycans. The polypeptide is Probable beta-galactosidase C (lacC) (Neosartorya fischeri (strain ATCC 1020 / DSM 3700 / CBS 544.65 / FGSC A1164 / JCM 1740 / NRRL 181 / WB 181) (Aspergillus fischerianus)).